The chain runs to 220 residues: Ribonuclease HII (220 aa).

The 210-residue stretch at Met1–Lys210 folds into the RNase H type-2 domain. A divalent metal cation contacts are provided by Asp7, Glu8, and Asp105.

It belongs to the RNase HII family. The cofactor is Mn(2+). Requires Mg(2+) as cofactor.

The protein resides in the cytoplasm. The enzyme catalyses Endonucleolytic cleavage to 5'-phosphomonoester.. Endonuclease that specifically degrades the RNA of RNA-DNA hybrids. This Pyrococcus horikoshii (strain ATCC 700860 / DSM 12428 / JCM 9974 / NBRC 100139 / OT-3) protein is Ribonuclease HII (rnhB).